Here is a 143-residue protein sequence, read N- to C-terminus: D-aminoacyl-tRNA deacylase (143 aa).

Residues 135-136 carry the Gly-cisPro motif, important for rejection of L-amino acids motif; that stretch reads GP.

This sequence belongs to the DTD family. In terms of assembly, homodimer.

It is found in the cytoplasm. The catalysed reaction is glycyl-tRNA(Ala) + H2O = tRNA(Ala) + glycine + H(+). It catalyses the reaction a D-aminoacyl-tRNA + H2O = a tRNA + a D-alpha-amino acid + H(+). An aminoacyl-tRNA editing enzyme that deacylates mischarged D-aminoacyl-tRNAs. Also deacylates mischarged glycyl-tRNA(Ala), protecting cells against glycine mischarging by AlaRS. Acts via tRNA-based rather than protein-based catalysis; rejects L-amino acids rather than detecting D-amino acids in the active site. By recycling D-aminoacyl-tRNA to D-amino acids and free tRNA molecules, this enzyme counteracts the toxicity associated with the formation of D-aminoacyl-tRNA entities in vivo and helps enforce protein L-homochirality. This chain is D-aminoacyl-tRNA deacylase, found in Mycolicibacterium paratuberculosis (strain ATCC BAA-968 / K-10) (Mycobacterium paratuberculosis).